Consider the following 183-residue polypeptide: Adenine phosphoribosyltransferase (183 aa).

This sequence belongs to the purine/pyrimidine phosphoribosyltransferase family. Homodimer.

Its subcellular location is the cytoplasm. It catalyses the reaction AMP + diphosphate = 5-phospho-alpha-D-ribose 1-diphosphate + adenine. Its pathway is purine metabolism; AMP biosynthesis via salvage pathway; AMP from adenine: step 1/1. Functionally, catalyzes a salvage reaction resulting in the formation of AMP, that is energically less costly than de novo synthesis. This Shewanella sp. (strain MR-7) protein is Adenine phosphoribosyltransferase.